A 1381-amino-acid polypeptide reads, in one-letter code: Hepatocyte growth factor receptor (1381 aa).

An N-terminal signal peptide occupies residues 1-24; that stretch reads MKAPAVLAPGILVLLFTLVQRSNG. Residues 25–932 are Extracellular-facing; it reads ECKEALAKSE…VIVQPDQNFT (908 aa). Residues 27–515 form the Sema domain; sequence KEALAKSEMN…TGKKITKIPL (489 aa). An N-linked (GlcNAc...) asparagine glycan is attached at N45. 4 cysteine pairs are disulfide-bonded: C95/C101, C98/C160, C133/C141, and C172/C175. A glycan (N-linked (GlcNAc...) asparagine) is linked at N106. Residue N149 is glycosylated (N-linked (GlcNAc...) asparagine). An N-linked (GlcNAc...) asparagine glycan is attached at N202. 2 disulfide bridges follow: C298/C363 and C385/C397. N399 and N405 each carry an N-linked (GlcNAc...) asparagine glycan. 4 disulfide bridges follow: C520/C538, C526/C561, C529/C545, and C541/C551. IPT/TIG domains follow at residues 563–655, 657–739, and 742–836; these read PAIY…FSYV, PIIT…FSYR, and PIVY…LIYV. Residue T582 is glycosylated (O-linked (Man) threonine). Residues N607 and N635 are each glycosylated (N-linked (GlcNAc...) asparagine). 2 O-linked (Man) threonine glycosylation sites follow: T676 and T761. Residues N785, N879, and N930 are each glycosylated (N-linked (GlcNAc...) asparagine). Residues 933–955 traverse the membrane as a helical segment; it reads GLIAGVVSISIALLLLLGLFLWL. Topologically, residues 956–1381 are cytoplasmic; sequence KKRKQIKDLG…EDNADDEVDT (426 aa). S966 bears the Phosphoserine mark. T977 is modified (phosphothreonine). Phosphoserine occurs at positions 990, 997, and 1000. Y1003 carries the phosphotyrosine modification. Positions 1078-1345 constitute a Protein kinase domain; that stretch reads VHFNEVIGRG…RISAIFSTFI (268 aa). ATP-binding positions include 1084 to 1092 and K1110; that span reads IGRGHFGCV. D1204 serves as the catalytic Proton acceptor. The tract at residues 1212–1381 is interaction with RANBP9; that stretch reads LDEKFTVKVA…EDNADDEVDT (170 aa). At Y1230 the chain carries Phosphotyrosine. Y1234 and Y1235 each carry phosphotyrosine; by autocatalysis. Residue T1289 is modified to Phosphothreonine. The tract at residues 1320 to 1359 is interaction with MUC20; it reads WHPKAEMRPSFSELVSRISAIFSTFIGEHYVHVNATYVNV. 2 positions are modified to phosphotyrosine; by autocatalysis: Y1349 and Y1356. Y1365 carries the phosphotyrosine modification.

The protein belongs to the protein kinase superfamily. Tyr protein kinase family. Heterodimer made of an alpha chain (50 kDa) and a beta chain (145 kDa) which are disulfide linked. Binds PLXNB1. Interacts when phosphorylated with downstream effectors including STAT3, PIK3R1, SRC, PCLG1, GRB2 and GAB1. Interacts with SPSB1, SPSB2 and SPSB4. Interacts with INPP5D/SHIP1. When phosphorylated at Tyr-1356, interacts with INPPL1/SHIP2. Interacts with RANBP9 and RANBP10, as well as SPSB1, SPSB2, SPSB3 and SPSB4. SPSB1 binding occurs in the presence and in the absence of HGF, however HGF treatment has a positive effect on this interaction. Interacts with MUC20; prevents interaction with GRB2 and suppresses hepatocyte growth factor-induced cell proliferation. Interacts with GRB10. Interacts with PTPN1 and PTPN2. Interacts with HSP90AA1 and HSP90AB1; the interaction suppresses MET kinase activity. Interacts with tensin TNS3. Interacts (when phosphorylated) with tensin TNS4 (via SH2 domain); the interaction increases MET protein stability by inhibiting MET endocytosis and subsequent lysosomal degradation. In terms of processing, autophosphorylated in response to ligand binding on Tyr-1234 and Tyr-1235 in the kinase domain leading to further phosphorylation of Tyr-1349 and Tyr-1356 in the C-terminal multifunctional docking site. Dephosphorylated by PTPRJ at Tyr-1349 and Tyr-1365. Dephosphorylated by PTPN1 and PTPN2. Ubiquitinated. Ubiquitination by CBL regulates the receptor stability and activity through proteasomal degradation. Post-translationally, O-mannosylation of IPT/TIG domains by TMEM260 is required for protein maturation. O-mannosylated residues are composed of single mannose glycans that are not elongated or modified.

It is found in the membrane. It catalyses the reaction L-tyrosyl-[protein] + ATP = O-phospho-L-tyrosyl-[protein] + ADP + H(+). Its activity is regulated as follows. In its inactive state, the C-terminal tail interacts with the catalytic domain and inhibits the kinase activity. Upon ligand binding, the C-terminal tail is displaced and becomes phosphorylated, thus increasing the kinase activity. Receptor tyrosine kinase that transduces signals from the extracellular matrix into the cytoplasm by binding to hepatocyte growth factor/HGF ligand. Regulates many physiological processes including proliferation, scattering, morphogenesis and survival. Ligand binding at the cell surface induces autophosphorylation of MET on its intracellular domain that provides docking sites for downstream signaling molecules. Following activation by ligand, interacts with the PI3-kinase subunit PIK3R1, PLCG1, SRC, GRB2, STAT3 or the adapter GAB1. Recruitment of these downstream effectors by MET leads to the activation of several signaling cascades including the RAS-ERK, PI3 kinase-AKT, or PLCgamma-PKC. The RAS-ERK activation is associated with the morphogenetic effects while PI3K/AKT coordinates prosurvival effects. During embryonic development, MET signaling plays a role in gastrulation, development and migration of muscles and neuronal precursors, angiogenesis and kidney formation. In adults, participates in wound healing as well as organ regeneration and tissue remodeling. Also promotes differentiation and proliferation of hematopoietic cells. This chain is Hepatocyte growth factor receptor (MET), found in Colobus guereza (Mantled guereza).